Consider the following 212-residue polypeptide: Adenylate kinase (212 aa).

10-15 (GAGKGT) is an ATP binding site. The NMP stretch occupies residues 30–59 (STGDMFRAAMVNQTEMGVLAKSYIDKGELV). AMP is bound by residues Thr31, Arg36, 57 to 59 (ELV), 86 to 89 (GYPR), and Gln93. The segment at 127 to 159 (GRIIHRVTGETFHKVFNPPVDYKEEDYYQREDD) is LID. Residues Arg128 and 137 to 138 (TF) each bind ATP. AMP is bound by residues Arg156 and Arg167. Position 195 (Gln195) interacts with ATP.

It belongs to the adenylate kinase family. As to quaternary structure, monomer.

The protein resides in the cytoplasm. It catalyses the reaction AMP + ATP = 2 ADP. It functions in the pathway purine metabolism; AMP biosynthesis via salvage pathway; AMP from ADP: step 1/1. Catalyzes the reversible transfer of the terminal phosphate group between ATP and AMP. Plays an important role in cellular energy homeostasis and in adenine nucleotide metabolism. This is Adenylate kinase from Streptococcus pneumoniae (strain 70585).